Here is a 299-residue protein sequence, read N- to C-terminus: uncharacterized protein (299 aa).

This sequence belongs to the glycosyltransferase 2 family.

This is an uncharacterized protein from Mycoplasma pneumoniae (strain ATCC 29342 / M129 / Subtype 1) (Mycoplasmoides pneumoniae).